Consider the following 701-residue polypeptide: Arachidonate 12-lipoxygenase, 12R-type (701 aa).

A PLAT domain is found at 2–119; the sequence is ATYKVKVATG…TLALREATGK (118 aa). The region spanning 120-701 is the Lipoxygenase domain; it reads ITADDTLPIL…PVLIENSISI (582 aa). Fe cation contacts are provided by His398, His403, His578, Asn582, and Ile701.

It belongs to the lipoxygenase family. The cofactor is Fe cation. As to expression, expressed in skin epidermis and other stratified epithelia including tongue and forestomach. Low levels of expression are found in trachea, brain and lung. Not expressed in intestine, liver, kidney, adipose tissue, muscle or hematopoietic cells.

The protein localises to the cytoplasm. Its subcellular location is the perinuclear region. The enzyme catalyses 1-O-methyl-(5Z,8Z,11Z,14Z)-eicosatetraenoate + O2 = 1-O-methyl (5Z,8Z,10E,12R,14Z)-hydroperoxyiecosatetraenoate. It catalyses the reaction 1-O-methyl-(5Z,8Z,11Z,14Z)-eicosatetraenoate + O2 = 1-O-methyl-8-hydroperoxy-(5Z,9E,11Z,14Z)-eicosatetraenoate. It carries out the reaction (5Z,8Z,11Z,14Z)-eicosatetraenoate + O2 = (12R)-hydroperoxy-(5Z,8Z,10E,14Z)-eicosatetraenoate. The catalysed reaction is N-[omega-(9Z,12Z)-octadecadienoyloxy]acyl-beta-D-glucosyl-(1&lt;-&gt;1)-octadecasphing-4E-enine + O2 = N-[omega-(9R)-hydroperoxy-(10E,12Z)-octadecadienoyloxy]acyl-beta-D-glucosyl-(1&lt;-&gt;1)-octadecasphing-4E-enine. The enzyme catalyses a N-[omega-(9Z,12Z)-octadecadienoyloxy]-acylsphin-4E-enine + O2 = a N-[omega-(9R)-hydroperoxy-(10E,12Z)-octadecadienoyloxy]-acylsphin-4E-enine. It catalyses the reaction (6Z,9Z,12Z)-octadecatrienoate + O2 = 10-hydroperoxy-(6Z,8E,12Z)-octadecatrienoate. It carries out the reaction (4Z,7Z,10Z,13Z,16Z,19Z)-docosahexaenoate + O2 = 14-hydroperoxy-(4Z,7Z,10Z,12E,16Z,19Z)-docosahexaenoate. The catalysed reaction is (8Z,11Z,14Z)-eicosatrienoate + O2 = (8Z,10E,14Z)-12-hydroperoxyeicosatrienoate. The enzyme catalyses (5Z,8Z,11Z,14Z,17Z)-eicosapentaenoate + O2 = (5Z,7Z,8Z,10E,14Z,17Z)-12-hydroperoxyeicosapentaenoate. It catalyses the reaction (6Z,9Z,12Z)-octadecatrienoate + O2 = 10R-hydroperoxy-(6Z,8E,12Z)-octadecatrienoate. It carries out the reaction 1-O-methyl-(5Z,8Z,11Z,14Z)-eicosatetraenoate + O2 = 1-O-methyl-(8R)-hydroperoxy-(5Z,9E,11Z,14Z)-eicosatrienoate. The catalysed reaction is 1-O-methyl-(9Z,12Z)-octadecadienoate + O2 = 1-O-methyl-(9R)-hydroperoxy-(10E,12Z)-octadecadienoate. The enzyme catalyses 1-O-methyl-20-hydroxy-(5Z,8Z,11Z,14Z)-eicosatetraenoate + O2 = 1-O-methyl-8-hydroperoxy-20-hydroxy-(5Z,9E,11Z,14Z)-eicosatetraenoate. It catalyses the reaction 1-O-methyl-20-hydroxy-(5Z,8Z,11Z,14Z)-eicosatetraenoate + O2 = 1-O-methyl-12-hydroperoxy-20-hydroxy-(5Z,8Z,10E,14Z)-eicosatetraenoate. It carries out the reaction 1-O-methyl-20-hydroxy-(5Z,8Z,11Z,14Z)-eicosatetraenoate + O2 = 1-O-methyl-9-hydroperoxy-20-hydroxy-(5Z,7E,11Z,14Z)-eicosatetraenoate. The catalysed reaction is 1-O-methyl-(9Z,12Z)-octadecadienoate + O2 = 1-O-methyl-(13S)-hydroperoxy-(9Z,11E)-octadecadienoate. It functions in the pathway lipid metabolism; hydroperoxy eicosatetraenoic acid biosynthesis. The protein operates within lipid metabolism; sphingolipid metabolism. Increased by calcium. In terms of biological role, catalyzes the regio and stereo-specific incorporation of a single molecule of dioxygen into free and esterified polyunsaturated fatty acids generating lipid hydroperoxides that can be further reduced to the corresponding hydroxy species. Does not convert arachidonic acid to (12R)-hydroperoxyeicosatetraenoic acid/(12R)-HPETE. In the skin, acts upstream of ALOXE3 on the lineolate moiety of esterified omega-hydroxyacyl-sphingosine (EOS) ceramides to produce an epoxy-ketone derivative, a crucial step in the conjugation of omega-hydroxyceramide to membrane proteins. Therefore plays a crucial role in the synthesis of corneocytes lipid envelope and the establishment of the skin barrier to water loss. May also play a role in the regulation of the expression of airway mucins. This chain is Arachidonate 12-lipoxygenase, 12R-type, found in Mus musculus (Mouse).